The chain runs to 630 residues: Probable potassium transport system protein Kup (630 aa).

12 helical membrane passes run 17-37, 51-71, 105-125, 144-164, 175-195, 218-238, 255-275, 283-303, 344-364, 374-394, 402-422, and 428-448; these read LAIA…LYSL, PSAI…VVGI, ITGL…GDAV, PQLS…LFWI, LFGP…IYHI, VLLA…AEAL, YVLV…LLLL, PFFL…STVA, IYVP…VIGF, YGIA…VVMV, LLVA…FGAN, and QGGW…MTWY.

The protein belongs to the HAK/KUP transporter (TC 2.A.72) family.

The protein resides in the cell inner membrane. The catalysed reaction is K(+)(in) + H(+)(in) = K(+)(out) + H(+)(out). Its function is as follows. Transport of potassium into the cell. Likely operates as a K(+):H(+) symporter. This is Probable potassium transport system protein Kup from Burkholderia pseudomallei (strain 1710b).